The sequence spans 775 residues: MEVLVQLALLLVVHGSLVVLVAGKSVPRVIDQDLERYEPLEEEDHRGARVPFNLEETYDQSFRANSFNGTWKTDREILYSDNYVGDIRLFDVTTGSGTVLLDSSVTADFDKASVMFSFDNSHVAIGHDYVNGFRYSIHQKCTVYNIKSRTFTDIANGDRIPLFKWSPTRNALIYVHKNDIYYQVFFEGGSDTRRITNTGVPDIVFNGIPDWVYEEEVLGSPVAFWISPDGRHLAFATFNDTNVRDIVISKYGSPGNSRDQYPNEIRIKYPKAGTTNPFVSLSVIDLHDPSSKLIDLPPPVDVVGADNVLYTANWRRDGEIVATWTNRVQNKAQLVLYDTKGNANNIYYEEETEGWLRIQPPLYHDRYVIVAKLQDSGTKAGRFLHATRLEYRNGALVDETDLTPGTCEVISLLLVDHARARLYYLGTELGKPSHKNLYSVQLSGNEPPVCLSCDVLTPEGNRCTYAYAYFSTNGSHYALYCAGPDPVFIAIVNANHRQISIWEENRSLRRKLAARTQPIVKNFNVNANGYTNKVKLYLPPDFDETKKYPLLITVYAGPNTIRITEEATYGFESYIVTNRSVIYGRIDGRGSAYKGSKMLFEIYRRLGTVEIEDQIIITRTLQEKYSWIDSNRTGIWGWSYGGFSAAMVLATDAESVFKCGISVAPVTSWIYYDSLYTERFMGLPTPEDNQSGYNDTDVSRRVEGMRGKKYMLIHGTADDNVHYQQTMMLNKALVNSDIMFQQQTYTDEAHALGNVFPHLYHTTDRFWANCLGYSH.

The signal sequence occupies residues 1–23; it reads MEVLVQLALLLVVHGSLVVLVAG. Residues asparagine 68 and asparagine 239 are each glycosylated (N-linked (GlcNAc...) asparagine). 2 cysteine pairs are disulfide-bonded: cysteine 450–cysteine 453 and cysteine 463–cysteine 481. N-linked (GlcNAc...) asparagine glycosylation is found at asparagine 473, asparagine 505, asparagine 578, and asparagine 631. Residue serine 639 is the Charge relay system of the active site. A disulfide bridge connects residues cysteine 659 and cysteine 770. Residues asparagine 689 and asparagine 694 are each glycosylated (N-linked (GlcNAc...) asparagine). Residues aspartate 718 and histidine 750 each act as charge relay system in the active site.

The protein belongs to the peptidase S9B family. DPPIV subfamily. Expressed by the venom duct.

It localises to the secreted. The catalysed reaction is Release of an N-terminal dipeptide, Xaa-Yaa-|-Zaa-, from a polypeptide, preferentially when Yaa is Pro, provided Zaa is neither Pro nor hydroxyproline.. Its activity is regulated as follows. Inhibited by diprotin A. Functionally, venom dipeptidyl-peptidase which removes N-terminal dipeptides sequentially from polypeptides having unsubstituted N-termini provided that the penultimate residue is proline. May process promelittin into its active form and/or modulate the chemotactic activity of immune cells after the insect sting. This Apis mellifera (Honeybee) protein is Venom dipeptidyl peptidase 4.